The sequence spans 320 residues: Acyl-coenzyme A thioesterase 8 (320 aa).

Catalysis depends on charge relay system residues aspartate 233, serine 255, and glutamine 305. The Microbody targeting signal signature appears at 318–320 (SKL).

The protein belongs to the C/M/P thioester hydrolase family. Homodimer. As to expression, ubiquitous.

The protein localises to the peroxisome matrix. It catalyses the reaction choloyl-CoA + H2O = cholate + CoA + H(+). The enzyme catalyses chenodeoxycholoyl-CoA + H2O = chenodeoxycholate + CoA + H(+). It carries out the reaction acetyl-CoA + H2O = acetate + CoA + H(+). The catalysed reaction is malonyl-CoA + H2O = malonate + CoA + H(+). It catalyses the reaction acetoacetyl-CoA + H2O = acetoacetate + CoA + H(+). The enzyme catalyses propanoyl-CoA + H2O = propanoate + CoA + H(+). It carries out the reaction butanoyl-CoA + H2O = butanoate + CoA + H(+). The catalysed reaction is succinyl-CoA + H2O = succinate + CoA + H(+). It catalyses the reaction glutaryl-CoA + H2O = glutarate + CoA + H(+). The enzyme catalyses hexanoyl-CoA + H2O = hexanoate + CoA + H(+). It carries out the reaction hexanedioyl-CoA + H2O = hexanedioate + CoA + H(+). The catalysed reaction is octanoyl-CoA + H2O = octanoate + CoA + H(+). It catalyses the reaction octanedioyl-CoA + H2O = octanedioate + CoA + H(+). The enzyme catalyses decanoyl-CoA + H2O = decanoate + CoA + H(+). It carries out the reaction decanedioyl-CoA + H2O = decanedioate + CoA + H(+). The catalysed reaction is dodecanoyl-CoA + H2O = dodecanoate + CoA + H(+). It catalyses the reaction dodecanedioyl-CoA + H2O = dodecanedioate + CoA + H(+). The enzyme catalyses tetradecanoyl-CoA + H2O = tetradecanoate + CoA + H(+). It carries out the reaction (9Z)-tetradecenoyl-CoA + H2O = (9Z)-tetradecenoate + CoA + H(+). The catalysed reaction is hexadecanoyl-CoA + H2O = hexadecanoate + CoA + H(+). It catalyses the reaction (9Z)-hexadecenoyl-CoA + H2O = (9Z)-hexadecenoate + CoA + H(+). The enzyme catalyses octadecanoyl-CoA + H2O = octadecanoate + CoA + H(+). It carries out the reaction (9Z)-octadecenoyl-CoA + H2O = (9Z)-octadecenoate + CoA + H(+). The catalysed reaction is (9Z,12Z)-octadecadienoyl-CoA + H2O = (9Z,12Z)-octadecadienoate + CoA + H(+). It catalyses the reaction eicosanoyl-CoA + H2O = eicosanoate + CoA + H(+). The enzyme catalyses (5Z,8Z,11Z,14Z)-eicosatetraenoyl-CoA + H2O = (5Z,8Z,11Z,14Z)-eicosatetraenoate + CoA + H(+). It carries out the reaction 4,8-dimethylnonanoyl-CoA + H2O = 4,8-dimethylnonanoate + CoA + H(+). The catalysed reaction is 2,6-dimethylheptanoyl-CoA + H2O = 2,6-dimethylheptanoate + CoA + H(+). It catalyses the reaction (3S)-3-hydroxy-3-methylglutaryl-CoA + H2O = 3-hydroxy-3-methylglutarate + CoA + H(+). The enzyme catalyses 3alpha,7alpha,12alpha-trihydroxy-5beta-cholestan-26-oyl-CoA + H2O = 3alpha,7alpha,12alpha-trihydroxy-5beta-cholestan-26-oate + CoA + H(+). It carries out the reaction 2-methyloctadecanoyl-CoA + H2O = 2-methyloctadecanoate + CoA + H(+). The catalysed reaction is prostaglandin F2alpha-CoA + H2O = prostaglandin F2alpha + CoA + H(+). The protein operates within lipid metabolism; fatty acid metabolism. Its activity is regulated as follows. Inhibited by CoASH (IC(50)=10-15 uM). Also inhibited by cysteine-reactive agents. In terms of biological role, catalyzes the hydrolysis of acyl-CoAs into free fatty acids and coenzyme A (CoASH), regulating their respective intracellular levels. Displays no strong substrate specificity with respect to the carboxylic acid moiety of Acyl-CoAs. Hydrolyzes medium length (C2 to C20) straight-chain, saturated and unsaturated acyl-CoAS but is inactive towards substrates with longer aliphatic chains. Moreover, it catalyzes the hydrolysis of CoA esters of bile acids, such as choloyl-CoA and chenodeoxycholoyl-CoA and competes with bile acid CoA:amino acid N-acyltransferase (BAAT). Is also able to hydrolyze CoA esters of dicarboxylic acids. It is involved in the metabolic regulation of peroxisome proliferation. The chain is Acyl-coenzyme A thioesterase 8 (Acot8) from Mus musculus (Mouse).